Reading from the N-terminus, the 678-residue chain is Vitrin (678 aa).

Positions 1 to 26 (MRTVVLTMKASVIEMFLVLLVTGVHS) are cleaved as a signal peptide. The region spanning 40 to 133 (TVPQINCDVK…LSLPRWRESF (94 aa)) is the LCCL domain. 2 disulfides stabilise this stretch: C46-C62 and C66-C86. Over residues 154 to 168 (SSKSPAAQAGETTKA) the composition is skewed to polar residues. Disordered regions lie at residues 154–177 (SSKSPAAQAGETTKAYQRPPIPGT) and 199–257 (TLPR…GAAF). The segment covering 199-216 (TLPRPSPSAASTTSIPRP) has biased composition (low complexity). Residues 230–240 (STATYTSSQNR) show a composition bias toward polar residues. VWFA domains are found at residues 293–478 (DLSF…VKRV) and 495–668 (DIGF…IQNI). N390 and N520 each carry an N-linked (GlcNAc...) asparagine glycan.

In terms of assembly, binds dermatan sulfate and chondroitin sulfate.

It is found in the secreted. Its subcellular location is the extracellular space. The protein localises to the extracellular matrix. In terms of biological role, promotes matrix assembly and cell adhesiveness. Plays a role in spinal cord formation by regulating the proliferation and differentiation of neural stem cells. The polypeptide is Vitrin (VIT) (Homo sapiens (Human)).